We begin with the raw amino-acid sequence, 407 residues long: Na(+)-translocating NADH-quinone reductase subunit F (407 aa).

A helical transmembrane segment spans residues 6-26 (IFLAIGMFTAIVLGLVAIILV). Residues 35-127 (GDVTIQINGE…DMQIRVPEEV (93 aa)) form the 2Fe-2S ferredoxin-type domain. Positions 70, 76, 79, and 111 each coordinate [2Fe-2S] cluster. Residues 130-269 (VKKWECTVES…YGPFGEFFAK (140 aa)) form the FAD-binding FR-type domain. The interval 272–389 (EAEMVFIGGG…PMMNAAVIKM (118 aa)) is catalytic.

Belongs to the NqrF family. In terms of assembly, composed of six subunits; NqrA, NqrB, NqrC, NqrD, NqrE and NqrF. [2Fe-2S] cluster is required as a cofactor. Requires FAD as cofactor.

It is found in the cell inner membrane. The catalysed reaction is a ubiquinone + n Na(+)(in) + NADH + H(+) = a ubiquinol + n Na(+)(out) + NAD(+). Functionally, NQR complex catalyzes the reduction of ubiquinone-1 to ubiquinol by two successive reactions, coupled with the transport of Na(+) ions from the cytoplasm to the periplasm. The first step is catalyzed by NqrF, which accepts electrons from NADH and reduces ubiquinone-1 to ubisemiquinone by a one-electron transfer pathway. The chain is Na(+)-translocating NADH-quinone reductase subunit F from Pseudomonas aeruginosa (strain ATCC 15692 / DSM 22644 / CIP 104116 / JCM 14847 / LMG 12228 / 1C / PRS 101 / PAO1).